The primary structure comprises 237 residues: Lectin alpha chain (237 aa).

Mn(2+) contacts are provided by E8 and D10. The Ca(2+) site is built by D10, Y12, N14, and D19. The a carbohydrate site is built by Y12 and N14. Mn(2+) contacts are provided by D19 and H24. 99 to 100 provides a ligand contact to a carbohydrate; that stretch reads LY. D208 contributes to the Ca(2+) binding site. R228 is an a carbohydrate binding site.

It belongs to the leguminous lectin family. Homodimer and homotetramer. Oligomerization is pH-dependent with homotetramers forming at pH 4 and above.

Its function is as follows. D-mannose/D-glucose-binding lectin. Has anti-inflammatory activity in animal models when applied intravenously. Has antinociceptive activity in mice when applied intravenously. In Canavalia boliviana, this protein is Lectin alpha chain.